A 173-amino-acid polypeptide reads, in one-letter code: Large ribosomal subunit protein bL9 (173 aa).

Belongs to the bacterial ribosomal protein bL9 family.

In terms of biological role, binds to the 23S rRNA. The polypeptide is Large ribosomal subunit protein bL9 (Rickettsia bellii (strain RML369-C)).